The sequence spans 89 residues: UPF0250 protein Bphy_0213 (89 aa).

The protein belongs to the UPF0250 family.

The protein is UPF0250 protein Bphy_0213 of Paraburkholderia phymatum (strain DSM 17167 / CIP 108236 / LMG 21445 / STM815) (Burkholderia phymatum).